A 276-amino-acid polypeptide reads, in one-letter code: Type 2 phosphatidylinositol 4,5-bisphosphate 4-phosphatase (276 aa).

The span at 1–10 (MAADGIDERS) shows a compositional bias: basic and acidic residues. The tract at residues 1–27 (MAADGIDERSPLISPSSGNVTPTAPPY) is disordered. Residues 13-27 (ISPSSGNVTPTAPPY) are compositionally biased toward polar residues. Residue Cys106 is part of the active site. The short motif at 106 to 112 (CKDISRR) is the CX5R motif element. Helical transmembrane passes span 211–231 (CCTY…LTVG) and 246–266 (WAVA…WGAI).

The protein localises to the late endosome membrane. It is found in the lysosome membrane. The enzyme catalyses a 1,2-diacyl-sn-glycero-3-phospho-(1D-myo-inositol-4,5-bisphosphate) + H2O = a 1,2-diacyl-sn-glycero-3-phospho-(1D-myo-inositol-5-phosphate) + phosphate. In terms of biological role, catalyzes the hydrolysis of phosphatidylinositol-4,5-bisphosphate (PtdIns-4,5-P2) to phosphatidylinositol-4-phosphate (PtdIns-4-P). The chain is Type 2 phosphatidylinositol 4,5-bisphosphate 4-phosphatase (pip4p2) from Xenopus tropicalis (Western clawed frog).